Reading from the N-terminus, the 531-residue chain is Tyrosine 2,3-aminomutase (531 aa).

Residue Tyr51 is the Proton donor/acceptor of the active site. Substrate is bound at residue His81. The segment at residues 140 to 142 (ASG) is a cross-link (5-imidazolinone (Ala-Gly)). Ser141 carries the 2,3-didehydroalanine (Ser) modification. Substrate-binding residues include Asn193 and Arg298.

Belongs to the TAL/TAM family. In terms of assembly, homotetramer; dimer of dimers. Contains an active site 4-methylidene-imidazol-5-one (MIO), which is formed autocatalytically by cyclization and dehydration of residues Ala-Ser-Gly.

The catalysed reaction is L-tyrosine = 3-amino-3-(4-hydroxyphenyl)propanoate. The enzyme catalyses L-tyrosine = (E)-4-coumarate + NH4(+). Functionally, has aminomutase and, to a lesser extent, ammonia-lyase activity. Primarily, catalyzes the rearrangement of L-tyrosine to R-beta-tyrosine, which is incorporated into secondary metabolites called chondramides. The aminomutase activity mainly produces R-beta-tyrosine but also S-beta tyrosine in smaller amounts. Does not accept D-tyrosine, L-histidine or L-phenylalanine as substrates. The protein is Tyrosine 2,3-aminomutase of Chondromyces crocatus.